The chain runs to 315 residues: Eukaryotic translation initiation factor 2 subunit 1 (315 aa).

The region spanning 17 to 88 is the S1 motif domain; sequence EDVVMVNVRS…EKGYIDLSKR (72 aa). At Ser49 the chain carries Phosphoserine; by HRI. Ser52 carries the phosphoserine modification. An N6-acetyllysine modification is found at Lys141. A Phosphoserine modification is found at Ser158. Phosphothreonine occurs at positions 279 and 281. Residues 293-315 are disordered; it reads LERENAEVDGDDDAEEMEAKAED. Over residues 299–308 the composition is skewed to acidic residues; the sequence is EVDGDDDAEE.

The protein belongs to the eIF-2-alpha family. Eukaryotic translation initiation factor 2 eIF2 is a heterotrimeric complex composed of an alpha (EIF2S1), a beta (EIF2S2) and a gamma (EIF2S3) chain. eIF2 is member of the 43S pre-initiation complex (43S PIC). eIF2 forms a complex with at least CELF1/CUGBP1, CALR, CALR3, EIF2S1, EIF2S2, HSP90B1 and HSPA5. Interaction with METAP2 protects EIF2S1 from inhibitory phosphorylation. Interacts with ABCF1 isoform 2. Associates with ribosomes. Interacts with DDX3X in an RNA-independent manner. Interacts with CDC123. In terms of assembly, (Microbial infection) Interacts with rotavirus A non-structural protein 2; this interaction probably plays a role in the sequestration of IF2A in viral factories. Interacts with rotavirus A non-structural protein 5; this interaction probably plays a role in its sequestration in viral factories. In terms of processing, phosphorylation at Ser-49 and Ser-52 stabilizes the eIF-2/GDP/eIF2B complex and prevents GDP/GTP exchange reaction, thus impairing the recycling of eIF-2 between successive rounds of initiation and leading to global inhibition of translation, while concomitantly initiating the preferential translation of integrated stress response (ISR)-specific mRNAs. Substrate for at least 4 kinases: EIF2AK1/HRI, EIF2AK2/PKR, EIF2AK3/PERK and EIF2AK4/GCN2. Phosphorylation on Ser-52 by the EIF2AK4/GCN2 protein kinase occurs in response to amino acid starvation and UV irradiation. Phosphorylation at Ser-52 by the EIF2AK3/PERK protein kinase occurs in response to the unfolded protein response. Phosphorylation at Ser-52 by EIF2AK1/HRI in response to mitochondrial damage promotes relocalization to the mitochondrial surface. (Microbial infection) Phosphorylation by vaccinia virus protein E3 and rotavirus A stabilizes the eIF-2/GDP/eIF2B complex and prevents GDP/GTP exchange reaction, thus impairing the recycling of eIF-2 between successive rounds of initiation and leading to global inhibition of translation.

Its subcellular location is the cytoplasm. The protein resides in the stress granule. The protein localises to the cytosol. It localises to the mitochondrion. Activity is regulated by phosphorylation at Ser-49 and Ser-52, which stabilizes the eIF2/GDP/eIF2B complex and prevents the eIF2B-mediated exchange of GDP for GTP, thereby preventing the formation of the 43S pre-initiation complex (43S PIC). This results in the global attenuation of 5' cap-dependent protein synthesis and concomitant translation of ISR-specific mRNAs that contain a short upstream open reading frame (uORF) in their 5' UTR, such as ATF4, ATF5, DDIT3/CHOP and PPP1R15A/GADD34. Its function is as follows. Member of the eIF2 complex that functions in the early steps of protein synthesis by forming a ternary complex with GTP and initiator tRNA. This complex binds to a 40S ribosomal subunit, followed by mRNA binding to form a 43S pre-initiation complex (43S PIC). Junction of the 60S ribosomal subunit to form the 80S initiation complex is preceded by hydrolysis of the GTP bound to eIF2 and release of an eIF2-GDP binary complex. In order for eIF2 to recycle and catalyze another round of initiation, the GDP bound to eIF2 must exchange with GTP by way of a reaction catalyzed by eIF2B. EIF2S1/eIF2-alpha is a key component of the integrated stress response (ISR), required for adaptation to various stress: phosphorylation by metabolic-stress sensing protein kinases (EIF2AK1/HRI, EIF2AK2/PKR, EIF2AK3/PERK and EIF2AK4/GCN2) in response to stress converts EIF2S1/eIF2-alpha in a global protein synthesis inhibitor, leading to an attenuation of cap-dependent translation, while concomitantly initiating the preferential translation of ISR-specific mRNAs, such as the transcriptional activators ATF4 and QRICH1, and hence allowing ATF4- and QRICH1-mediated reprogramming. EIF2S1/eIF2-alpha also acts as an activator of mitophagy in response to mitochondrial damage: phosphorylation by EIF2AK1/HRI promotes relocalization to the mitochondrial surface, thereby triggering PRKN-independent mitophagy. The protein is Eukaryotic translation initiation factor 2 subunit 1 of Homo sapiens (Human).